The primary structure comprises 134 residues: Ribosome-binding factor A (134 aa).

This sequence belongs to the RbfA family. Monomer. Binds 30S ribosomal subunits, but not 50S ribosomal subunits or 70S ribosomes.

Its subcellular location is the cytoplasm. One of several proteins that assist in the late maturation steps of the functional core of the 30S ribosomal subunit. Associates with free 30S ribosomal subunits (but not with 30S subunits that are part of 70S ribosomes or polysomes). Required for efficient processing of 16S rRNA. May interact with the 5'-terminal helix region of 16S rRNA. The chain is Ribosome-binding factor A from Rhizobium johnstonii (strain DSM 114642 / LMG 32736 / 3841) (Rhizobium leguminosarum bv. viciae).